The sequence spans 154 residues: Xanthine-guanine phosphoribosyltransferase (154 aa).

5-phospho-alpha-D-ribose 1-diphosphate-binding positions include 37 to 38 (RG), Arg-69, and 88 to 96 (EDLVDSGDT). GMP is bound at residue Arg-69. Asp-89 is a Mg(2+) binding site. Guanine-binding residues include Asp-92 and Ile-135. Xanthine is bound by residues Asp-92 and Ile-135. Residues 92–96 (DSGDT) and 134–135 (WI) each bind GMP.

It belongs to the purine/pyrimidine phosphoribosyltransferase family. XGPT subfamily. In terms of assembly, homotetramer. It depends on Mg(2+) as a cofactor.

It is found in the cell inner membrane. It carries out the reaction GMP + diphosphate = guanine + 5-phospho-alpha-D-ribose 1-diphosphate. The catalysed reaction is XMP + diphosphate = xanthine + 5-phospho-alpha-D-ribose 1-diphosphate. It catalyses the reaction IMP + diphosphate = hypoxanthine + 5-phospho-alpha-D-ribose 1-diphosphate. The protein operates within purine metabolism; GMP biosynthesis via salvage pathway; GMP from guanine: step 1/1. Its pathway is purine metabolism; XMP biosynthesis via salvage pathway; XMP from xanthine: step 1/1. Purine salvage pathway enzyme that catalyzes the transfer of the ribosyl-5-phosphate group from 5-phospho-alpha-D-ribose 1-diphosphate (PRPP) to the N9 position of the 6-oxopurines guanine and xanthine to form the corresponding ribonucleotides GMP (guanosine 5'-monophosphate) and XMP (xanthosine 5'-monophosphate), with the release of PPi. To a lesser extent, also acts on hypoxanthine. In Vibrio campbellii (strain ATCC BAA-1116), this protein is Xanthine-guanine phosphoribosyltransferase.